Here is a 183-residue protein sequence, read N- to C-terminus: Intraflagellar transport protein 27 homolog (183 aa).

GTP contacts are provided by residues 12 to 19 (GAPTVGKT), 63 to 67 (DVSGQ), and 120 to 123 (NKSD).

The protein belongs to the small GTPase superfamily. Rab family. Component of the IFT complex B.

It localises to the cell projection. The protein localises to the cilium. Its subcellular location is the flagellum. Small GTPase-like component of the intraflagellar transport (IFT) complex B required for both anterograde and retrograde intraflagellar transport. May be involved in cargo loading of the retrograde transport. This is Intraflagellar transport protein 27 homolog from Trypanosoma brucei brucei (strain 927/4 GUTat10.1).